The chain runs to 267 residues: Tryptophan synthase alpha chain (267 aa).

Residues Glu49 and Asp60 each act as proton acceptor in the active site.

The protein belongs to the TrpA family. In terms of assembly, tetramer of two alpha and two beta chains.

The enzyme catalyses (1S,2R)-1-C-(indol-3-yl)glycerol 3-phosphate + L-serine = D-glyceraldehyde 3-phosphate + L-tryptophan + H2O. It participates in amino-acid biosynthesis; L-tryptophan biosynthesis; L-tryptophan from chorismate: step 5/5. Its function is as follows. The alpha subunit is responsible for the aldol cleavage of indoleglycerol phosphate to indole and glyceraldehyde 3-phosphate. The chain is Tryptophan synthase alpha chain from Acaryochloris marina (strain MBIC 11017).